The sequence spans 230 residues: tRNA pseudouridine synthase B (230 aa).

Aspartate 45 serves as the catalytic Nucleophile.

It belongs to the pseudouridine synthase TruB family. Type 1 subfamily.

The enzyme catalyses uridine(55) in tRNA = pseudouridine(55) in tRNA. In terms of biological role, responsible for synthesis of pseudouridine from uracil-55 in the psi GC loop of transfer RNAs. The polypeptide is tRNA pseudouridine synthase B (Endomicrobium trichonymphae).